The chain runs to 253 residues: Proteasome subunit alpha type-7 (253 aa).

This sequence belongs to the peptidase T1A family. As to quaternary structure, the 26S proteasome consists of a 20S proteasome core and two 19S regulatory subunits. The 20S proteasome core is composed of 28 subunits that are arranged in four stacked rings, resulting in a barrel-shaped structure. The two end rings are each formed by seven alpha subunits, and the two central rings are each formed by seven beta subunits. The catalytic chamber with the active sites is on the inside of the barrel.

The protein localises to the cytoplasm. The protein resides in the nucleus. Its function is as follows. The proteasome is a multicatalytic proteinase complex which is characterized by its ability to cleave peptides with Arg, Phe, Tyr, Leu, and Glu adjacent to the leaving group at neutral or slightly basic pH. The proteasome has an ATP-dependent proteolytic activity. The sequence is that of Proteasome subunit alpha type-7 (pas-4) from Caenorhabditis elegans.